A 192-amino-acid polypeptide reads, in one-letter code: 7-methyl-GTP pyrophosphatase (192 aa).

The active-site Proton acceptor is the D69.

Belongs to the Maf family. YceF subfamily. The cofactor is a divalent metal cation.

It is found in the cytoplasm. The catalysed reaction is N(7)-methyl-GTP + H2O = N(7)-methyl-GMP + diphosphate + H(+). Nucleoside triphosphate pyrophosphatase that hydrolyzes 7-methyl-GTP (m(7)GTP). May have a dual role in cell division arrest and in preventing the incorporation of modified nucleotides into cellular nucleic acids. The protein is 7-methyl-GTP pyrophosphatase (maf-1) of Pseudomonas syringae pv. tomato (strain ATCC BAA-871 / DC3000).